The chain runs to 347 residues: Protease HtpX homolog (347 aa).

The next 4 helical transmembrane spans lie at 8-28, 44-64, 76-96, and 141-163; these read VALG…ATIA, AMAL…YLFV, LSFL…TYFA, and AFAY…LALT. H174 serves as a coordination point for Zn(2+). E175 is an active-site residue. H178 is a binding site for Zn(2+). 2 helical membrane-spanning segments follow: residues 185 to 205 and 221 to 241; these read AIML…VTAV and ILAA…LLVL. E248 serves as a coordination point for Zn(2+).

This sequence belongs to the peptidase M48B family. Zn(2+) is required as a cofactor.

The protein resides in the cell membrane. The protein is Protease HtpX homolog of Pyrobaculum aerophilum (strain ATCC 51768 / DSM 7523 / JCM 9630 / CIP 104966 / NBRC 100827 / IM2).